Here is a 209-residue protein sequence, read N- to C-terminus: dTTP/UTP pyrophosphatase (209 aa).

Asp79 acts as the Proton acceptor in catalysis.

The protein belongs to the Maf family. YhdE subfamily. The cofactor is a divalent metal cation.

Its subcellular location is the cytoplasm. The catalysed reaction is dTTP + H2O = dTMP + diphosphate + H(+). The enzyme catalyses UTP + H2O = UMP + diphosphate + H(+). Functionally, nucleoside triphosphate pyrophosphatase that hydrolyzes dTTP and UTP. May have a dual role in cell division arrest and in preventing the incorporation of modified nucleotides into cellular nucleic acids. The polypeptide is dTTP/UTP pyrophosphatase (Chelativorans sp. (strain BNC1)).